Here is a 476-residue protein sequence, read N- to C-terminus: Aspartyl/glutamyl-tRNA(Asn/Gln) amidotransferase subunit B (476 aa).

It belongs to the GatB/GatE family. GatB subfamily. In terms of assembly, heterotrimer of A, B and C subunits.

It carries out the reaction L-glutamyl-tRNA(Gln) + L-glutamine + ATP + H2O = L-glutaminyl-tRNA(Gln) + L-glutamate + ADP + phosphate + H(+). The enzyme catalyses L-aspartyl-tRNA(Asn) + L-glutamine + ATP + H2O = L-asparaginyl-tRNA(Asn) + L-glutamate + ADP + phosphate + 2 H(+). Its function is as follows. Allows the formation of correctly charged Asn-tRNA(Asn) or Gln-tRNA(Gln) through the transamidation of misacylated Asp-tRNA(Asn) or Glu-tRNA(Gln) in organisms which lack either or both of asparaginyl-tRNA or glutaminyl-tRNA synthetases. The reaction takes place in the presence of glutamine and ATP through an activated phospho-Asp-tRNA(Asn) or phospho-Glu-tRNA(Gln). In Bacillus cytotoxicus (strain DSM 22905 / CIP 110041 / 391-98 / NVH 391-98), this protein is Aspartyl/glutamyl-tRNA(Asn/Gln) amidotransferase subunit B.